The primary structure comprises 506 residues: Galactose/methyl galactoside import ATP-binding protein MglA (506 aa).

2 ABC transporter domains span residues 14–249 (LEMS…VGRS) and 264–506 (VILE…SLHL). 46-53 (GENGAGKS) contacts ATP.

This sequence belongs to the ABC transporter superfamily. Galactose/methyl galactoside importer (TC 3.A.1.2.3) family. The complex is composed of one ATP-binding protein (MglA), two transmembrane proteins (MglC) and a solute-binding protein (MglB).

The protein resides in the cell inner membrane. It catalyses the reaction D-galactose(out) + ATP + H2O = D-galactose(in) + ADP + phosphate + H(+). The catalysed reaction is methyl beta-D-galactoside(out) + ATP + H2O = methyl beta-D-galactoside(in) + ADP + phosphate + H(+). Functionally, part of the ABC transporter complex MglABC involved in galactose/methyl galactoside import. Responsible for energy coupling to the transport system. The chain is Galactose/methyl galactoside import ATP-binding protein MglA from Escherichia coli O6:K15:H31 (strain 536 / UPEC).